The sequence spans 346 residues: UDP-N-acetylenolpyruvoylglucosamine reductase (346 aa).

The FAD-binding PCMH-type domain occupies 18–189 (LRAQARAFIA…VSVVFALKTH (172 aa)). Arginine 165 is an active-site residue. Serine 240 acts as the Proton donor in catalysis. Residue glutamate 336 is part of the active site.

The protein belongs to the MurB family. Requires FAD as cofactor.

It localises to the cytoplasm. The catalysed reaction is UDP-N-acetyl-alpha-D-muramate + NADP(+) = UDP-N-acetyl-3-O-(1-carboxyvinyl)-alpha-D-glucosamine + NADPH + H(+). It participates in cell wall biogenesis; peptidoglycan biosynthesis. In terms of biological role, cell wall formation. The chain is UDP-N-acetylenolpyruvoylglucosamine reductase from Neisseria meningitidis serogroup A / serotype 4A (strain DSM 15465 / Z2491).